The primary structure comprises 187 residues: Elongation factor P (187 aa).

It belongs to the elongation factor P family.

It is found in the cytoplasm. The protein operates within protein biosynthesis; polypeptide chain elongation. In terms of biological role, involved in peptide bond synthesis. Stimulates efficient translation and peptide-bond synthesis on native or reconstituted 70S ribosomes in vitro. Probably functions indirectly by altering the affinity of the ribosome for aminoacyl-tRNA, thus increasing their reactivity as acceptors for peptidyl transferase. The protein is Elongation factor P of Arthrobacter sp. (strain FB24).